A 429-amino-acid chain; its full sequence is Glucose-1-phosphate adenylyltransferase (429 aa).

Residues Gly162, 177-178 (EK), and Ser209 contribute to the alpha-D-glucose 1-phosphate site.

It belongs to the bacterial/plant glucose-1-phosphate adenylyltransferase family. As to quaternary structure, homotetramer.

The enzyme catalyses alpha-D-glucose 1-phosphate + ATP + H(+) = ADP-alpha-D-glucose + diphosphate. Its pathway is glycan biosynthesis; glycogen biosynthesis. Involved in the biosynthesis of ADP-glucose, a building block required for the elongation reactions to produce glycogen. Catalyzes the reaction between ATP and alpha-D-glucose 1-phosphate (G1P) to produce pyrophosphate and ADP-Glc. The protein is Glucose-1-phosphate adenylyltransferase of Picosynechococcus sp. (strain ATCC 27264 / PCC 7002 / PR-6) (Agmenellum quadruplicatum).